The chain runs to 255 residues: tRNA (guanine-N(1)-)-methyltransferase (255 aa).

S-adenosyl-L-methionine is bound by residues G113 and 133–138 (IGDYVL).

The protein belongs to the RNA methyltransferase TrmD family. In terms of assembly, homodimer.

It localises to the cytoplasm. It carries out the reaction guanosine(37) in tRNA + S-adenosyl-L-methionine = N(1)-methylguanosine(37) in tRNA + S-adenosyl-L-homocysteine + H(+). Its function is as follows. Specifically methylates guanosine-37 in various tRNAs. The protein is tRNA (guanine-N(1)-)-methyltransferase of Shigella flexneri serotype 5b (strain 8401).